A 242-amino-acid chain; its full sequence is ATP-dependent dethiobiotin synthetase BioD (242 aa).

12-17 serves as a coordination point for ATP; the sequence is EVGKTV. T16 serves as a coordination point for Mg(2+). K37 is a catalytic residue. S41 contributes to the substrate binding site. ATP contacts are provided by residues D51 and 112 to 115; that span reads EGAG. Residues D51 and E112 each contribute to the Mg(2+) site.

The protein belongs to the dethiobiotin synthetase family. As to quaternary structure, homodimer. It depends on Mg(2+) as a cofactor.

Its subcellular location is the cytoplasm. It carries out the reaction (7R,8S)-7,8-diammoniononanoate + CO2 + ATP = (4R,5S)-dethiobiotin + ADP + phosphate + 3 H(+). Its pathway is cofactor biosynthesis; biotin biosynthesis; biotin from 7,8-diaminononanoate: step 1/2. Its function is as follows. Catalyzes a mechanistically unusual reaction, the ATP-dependent insertion of CO2 between the N7 and N8 nitrogen atoms of 7,8-diaminopelargonic acid (DAPA, also called 7,8-diammoniononanoate) to form a ureido ring. This Bacillus cereus (strain G9842) protein is ATP-dependent dethiobiotin synthetase BioD.